We begin with the raw amino-acid sequence, 752 residues long: Translation initiation factor IF-2 (752 aa).

Residues 148 to 159 (KKVKDKNKKEEP) are compositionally biased toward basic and acidic residues. A disordered region spans residues 148-170 (KKVKDKNKKEEPAVTPSTAPRKK). The region spanning 250–419 (PRPPIVTVMG…ALQAEIMELK (170 aa)) is the tr-type G domain. Residues 259 to 266 (GHVDHGKT) are G1. Residue 259–266 (GHVDHGKT) coordinates GTP. Positions 284 to 288 (GITQH) are G2. The G3 stretch occupies residues 305-308 (DTPG). Residues 305 to 309 (DTPGH) and 359 to 362 (NKID) each bind GTP. The G4 stretch occupies residues 359–362 (NKID). The tract at residues 395–397 (SAK) is G5.

This sequence belongs to the TRAFAC class translation factor GTPase superfamily. Classic translation factor GTPase family. IF-2 subfamily.

The protein resides in the cytoplasm. Its function is as follows. One of the essential components for the initiation of protein synthesis. Protects formylmethionyl-tRNA from spontaneous hydrolysis and promotes its binding to the 30S ribosomal subunits. Also involved in the hydrolysis of GTP during the formation of the 70S ribosomal complex. The polypeptide is Translation initiation factor IF-2 (Thermodesulfovibrio yellowstonii (strain ATCC 51303 / DSM 11347 / YP87)).